Consider the following 254-residue polypeptide: MKYSILGLTALSFVASAAAHTLVWGVWVNGVDQGDGRNIYIRSPPNNNPVKNLTSPDMTCNVDNRVVPKSVPVNAGDTLTFEWYHNTRDDDIIASSHHGPIAVYIAPAASNGQGNVWVKLFEDAYNVTNSTWAVDRLITAHGQHSVVVPHVAPGDYLFRAEIIALHEADSLYSQNPIRGAQFYISCAQITINSSDDSTPLPAGVPFPGAYTDSTPGIQFNIYTTPATSYVAPPPSVWSGALGGSIAQVGDASLE.

The N-terminal stretch at 1 to 19 (MKYSILGLTALSFVASAAA) is a signal peptide. H20 contributes to the Cu(2+) binding site. Residue H20 is modified to Methylhistidine. Position 28 (V28) interacts with (1,4-beta-D-glucosyl)n. N-linked (GlcNAc...) asparagine glycosylation is present at N52. C60 and C186 are disulfide-bonded. 4 residues coordinate (1,4-beta-D-glucosyl)n: V66, V67, D77, and N86. Residue H97 coordinates Cu(2+). Residue N129 is glycosylated (N-linked (GlcNAc...) asparagine). The (1,4-beta-D-glucosyl)n site is built by V148 and R159. O2-binding residues include H166 and Q181. Y183 lines the Cu(2+) pocket.

Belongs to the polysaccharide monooxygenase AA9 family. Cu(2+) is required as a cofactor. The catalytically essential N-terminal histidine His-20 is post-translationally modified by methylation to prevent protonation of the histidine side chain, and protect the critical active site of the enzyme from oxidative damage.

Its subcellular location is the secreted. The catalysed reaction is [(1-&gt;4)-beta-D-glucosyl]n+m + reduced acceptor + O2 = 4-dehydro-beta-D-glucosyl-[(1-&gt;4)-beta-D-glucosyl]n-1 + [(1-&gt;4)-beta-D-glucosyl]m + acceptor + H2O.. Its activity is regulated as follows. The polyphenol cinnamtannin B1 contained in methanolic extract of Cinnamomum cassia (cinnamon) acts as an inhibitor of catalytic activity. Functionally, lytic polysaccharide monooxygenase (LPMO) that depolymerizes crystalline and amorphous polysaccharides via the oxidation of scissile alpha- or beta-(1-4)-glycosidic bonds, yielding C1 or C4 oxidation product. Catalysis by LPMOs requires the reduction of the active-site copper from Cu(II) to Cu(I) by a reducing agent and H(2)O(2) or O(2) as a cosubstrate. Is able to cleave phosphoric acid swollen cellulose (PASC) in the presence of a reducing agent, yielding a range of cellooligosaccharides dominated by cellobiose and cellotriose. Activity is less sensitive to the reducing agent potential when cleaving xylan, suggesting that distinct catalytic mechanisms exist for xylan and glucan cleavage. This Panus similis (Lentinoid fungus) protein is AA9 family lytic polysaccharide monooxygenase A.